Here is a 305-residue protein sequence, read N- to C-terminus: Small ribosomal subunit protein bS1B (305 aa).

S1 motif domains follow at residues Gly-29 to Arg-98, Gly-116 to Arg-180, and Gly-194 to Arg-262.

This sequence belongs to the bacterial ribosomal protein bS1 family.

Its function is as follows. Binds mRNA. The polypeptide is Small ribosomal subunit protein bS1B (rps1b) (Synechocystis sp. (strain ATCC 27184 / PCC 6803 / Kazusa)).